The sequence spans 305 residues: MSKKLTFQEIILTLQQFWNDQGCMLMQAYDNEKGAGTMSPYTFLRAIGPEPWNAAYVEPSRRPADGRYGENPNRLYQHHQFQVVMKPSPSNIQELYLESLEKLGINPLEHDIRFVEDNWENPSTGSAGLGWEVWLDGMEITQFTYFQQVGGLATSPVTAEVTYGLERLASYIQEVDSVYDIEWADGVKYGEIFIQPEYEHSKYSFEISDQEMLLENFDKFEKEAGRALEEGLVHPAYDYVLKCSHTFNLLDARGAVSVTERAGYIARIRNLARVVAKTFVAERKRLGYPLLDEETRVKLLAEDAE.

The protein belongs to the class-II aminoacyl-tRNA synthetase family. In terms of assembly, tetramer of two alpha and two beta subunits.

It localises to the cytoplasm. The enzyme catalyses tRNA(Gly) + glycine + ATP = glycyl-tRNA(Gly) + AMP + diphosphate. This Streptococcus pneumoniae (strain ATCC 700669 / Spain 23F-1) protein is Glycine--tRNA ligase alpha subunit.